The chain runs to 358 residues: Transcription factor PCF6 (358 aa).

The disordered stretch occupies residues 1 to 29 (MEAAVGDGEGGGGGGGRGKRGRGGGGGEM). The span at 7–16 (DGEGGGGGGG) shows a compositional bias: gly residues. The region spanning 52–110 (GKDRHSKVYTAKGIRDRRVRLSVATAIQFYDLQDRLGFDQPSKAIEWLINAASPAIDTL) is the TCP domain. Disordered stretches follow at residues 127 to 163 (ADAA…DKEV) and 282 to 308 (ANRG…QQLQ). Composition is skewed to polar residues over residues 143–156 (LSNK…SETS) and 285–296 (GTLQSNSPSNMS).

As to quaternary structure, forms homodimers and heterodimers.

Its subcellular location is the nucleus. In terms of biological role, transcription activator. Binds the promoter core sequence 5'-GGNCC-3'. This chain is Transcription factor PCF6 (PCF6), found in Oryza sativa subsp. indica (Rice).